The sequence spans 221 residues: Probable N-acetyl-alpha-D-glucosaminyl L-malate deacetylase 2 (221 aa).

His-11, Asp-14, and His-125 together coordinate Zn(2+).

This sequence belongs to the PIGL family. Requires Zn(2+) as cofactor.

The enzyme catalyses (S)-malyl N-acetyl-alpha-D-glucosaminide + H2O = (S)-malyl alpha-D-glucosaminide + acetate. Its function is as follows. Involved in bacillithiol (BSH) biosynthesis. Catalyzes the second step of the pathway, the deacetylation of N-acetylglucosaminylmalate (GlcNAc-Mal) to glucosamine malate (GlcN-Mal). In Bacillus subtilis (strain 168), this protein is Probable N-acetyl-alpha-D-glucosaminyl L-malate deacetylase 2.